A 213-amino-acid polypeptide reads, in one-letter code: Phosphatidylserine decarboxylase proenzyme (213 aa).

The Schiff-base intermediate with substrate; via pyruvic acid role is filled by serine 180. Position 180 is a pyruvic acid (Ser); by autocatalysis (serine 180).

Belongs to the phosphatidylserine decarboxylase family. PSD-A subfamily. As to quaternary structure, heterodimer of a large membrane-associated beta subunit and a small pyruvoyl-containing alpha subunit. The cofactor is pyruvate. In terms of processing, is synthesized initially as an inactive proenzyme. Formation of the active enzyme involves a self-maturation process in which the active site pyruvoyl group is generated from an internal serine residue via an autocatalytic post-translational modification. Two non-identical subunits are generated from the proenzyme in this reaction, and the pyruvate is formed at the N-terminus of the alpha chain, which is derived from the carboxyl end of the proenzyme. The post-translation cleavage follows an unusual pathway, termed non-hydrolytic serinolysis, in which the side chain hydroxyl group of the serine supplies its oxygen atom to form the C-terminus of the beta chain, while the remainder of the serine residue undergoes an oxidative deamination to produce ammonia and the pyruvoyl prosthetic group on the alpha chain.

Its subcellular location is the cell membrane. The enzyme catalyses a 1,2-diacyl-sn-glycero-3-phospho-L-serine + H(+) = a 1,2-diacyl-sn-glycero-3-phosphoethanolamine + CO2. It functions in the pathway phospholipid metabolism; phosphatidylethanolamine biosynthesis; phosphatidylethanolamine from CDP-diacylglycerol: step 2/2. Functionally, catalyzes the formation of phosphatidylethanolamine (PtdEtn) from phosphatidylserine (PtdSer). The protein is Phosphatidylserine decarboxylase proenzyme of Carboxydothermus hydrogenoformans (strain ATCC BAA-161 / DSM 6008 / Z-2901).